The chain runs to 311 residues: Olfactory receptor 10J4 (311 aa).

Topologically, residues 1 to 29 (MPRPNFMAVTEFTFEGFSIFEWHHRLILF) are extracellular. The chain crosses the membrane as a helical span at residues 30-50 (VIFLVLYVLTLASNAIILIVI). Residues 51-57 (RLNHQLH) are Cytoplasmic-facing. A helical membrane pass occupies residues 58–78 (TPMYFFLSVLSISETYYTVAI). The Extracellular portion of the chain corresponds to 79 to 98 (NPQMLSGLLSPQQTISIPGC). Residues Cys98 and Cys180 are joined by a disulfide bond. The chain crosses the membrane as a helical span at residues 99-119 (AAQLFFYLTFGVNKCFLLTAM). At 120–149 (GYDHYVAICNPLQYSVIMGKKACIQLVSGS) the chain is on the cytoplasmic side. The helical transmembrane segment at 150 to 170 (WNIGLSTAIIQVSSVFSLPFC) threads the bilayer. At 171-202 (DANLISHFFCDIRPIMKLACADTTIKEFITLL) the chain is on the extracellular side. Residues 203–223 (ISLCVLVLPMVLIFISYVLIV) traverse the membrane as a helical segment. Residues 224–237 (TTILKIASAEGRRK) are Cytoplasmic-facing. Residues 238 to 254 (AFATCASHLTVVIVHYG) traverse the membrane as a helical segment. The Extracellular segment spans residues 255-272 (RTSFIYLKPKSQNSLQDR). The helical transmembrane segment at 273–292 (LISVTYTVITPLLNPVVYSL) threads the bilayer. The Cytoplasmic segment spans residues 293 to 311 (RNKEVKDALLRALGRKPLS).

It belongs to the G-protein coupled receptor 1 family.

The protein localises to the cell membrane. In terms of biological role, odorant receptor. The sequence is that of Olfactory receptor 10J4 (OR10J4) from Homo sapiens (Human).